The following is a 455-amino-acid chain: mRNA cleavage and polyadenylation factor CLP1 (455 aa).

Positions 28 and 67 each coordinate ATP. A disordered region spans residues 112–131; that stretch reads EAAARNNGGGRSAPHGPRVL. 137–142 serves as a coordination point for ATP; sequence GCGRTS.

The protein belongs to the Clp1 family. Clp1 subfamily. Component of a pre-mRNA cleavage factor complex. Interacts directly with PCF11.

The protein resides in the nucleus. Required for endonucleolytic cleavage during polyadenylation-dependent pre-mRNA 3'-end formation. The polypeptide is mRNA cleavage and polyadenylation factor CLP1 (Pyricularia oryzae (strain 70-15 / ATCC MYA-4617 / FGSC 8958) (Rice blast fungus)).